Consider the following 534-residue polypeptide: Phenylalanine N-monooxygenase CYP79D16 (534 aa).

The first 21 residues, 1–21, serve as a signal peptide directing secretion; sequence MEANVGFLTLCLAITLVRFLM. Heme is bound at residue C472. N-linked (GlcNAc...) asparagine glycosylation is present at N500.

Belongs to the cytochrome P450 family. The cofactor is heme. In terms of tissue distribution, expressed in seedlings.

The enzyme catalyses L-phenylalanine + 2 reduced [NADPH--hemoprotein reductase] + 2 O2 = (E)-phenylacetaldehyde oxime + 2 oxidized [NADPH--hemoprotein reductase] + CO2 + 3 H2O + 2 H(+). Involved in L-phenylalanine-derived cyanogenic glycoside biosynthesis, including prunasin and amygdalin defensive agents. Catalyzes the conversion of L-phenylalanine (Phe) into phenylacetaldoxime (PAOx). Cannot use tyrosine (Tyr), tryptophan (Trp) and valine (Val) as substrates. In Prunus mume (Japanese apricot), this protein is Phenylalanine N-monooxygenase CYP79D16.